Here is a 477-residue protein sequence, read N- to C-terminus: ATP synthase subunit beta (477 aa).

Position 155-162 (155-162 (GGAGVGKT)) interacts with ATP.

It belongs to the ATPase alpha/beta chains family. In terms of assembly, F-type ATPases have 2 components, CF(1) - the catalytic core - and CF(0) - the membrane proton channel. CF(1) has five subunits: alpha(3), beta(3), gamma(1), delta(1), epsilon(1). CF(0) has three main subunits: a(1), b(2) and c(9-12). The alpha and beta chains form an alternating ring which encloses part of the gamma chain. CF(1) is attached to CF(0) by a central stalk formed by the gamma and epsilon chains, while a peripheral stalk is formed by the delta and b chains.

It is found in the cell inner membrane. The enzyme catalyses ATP + H2O + 4 H(+)(in) = ADP + phosphate + 5 H(+)(out). Produces ATP from ADP in the presence of a proton gradient across the membrane. The catalytic sites are hosted primarily by the beta subunits. This is ATP synthase subunit beta from Mesorhizobium japonicum (strain LMG 29417 / CECT 9101 / MAFF 303099) (Mesorhizobium loti (strain MAFF 303099)).